A 584-amino-acid polypeptide reads, in one-letter code: ATP-dependent lipid A-core flippase (584 aa).

The next 5 membrane-spanning stretches (helical) occupy residues 15–35, 63–83, 153–173, 251–271, and 277–297; these read LLGY…SMAV, IMWV…AGFI, LGML…CLVV, TGVT…FAGL, and GLTA…FAPV. Residues 27–309 form the ABC transmembrane type-1 domain; it reads LLSMLSMAVA…ISSVSQAMQR (283 aa). One can recognise an ABC transporter domain in the interval 341–576; the sequence is LSFDAVSFAY…GGLYARLHSL (236 aa). Residue 375–382 coordinates ATP; sequence GSSGSGKT.

It belongs to the ABC transporter superfamily. Lipid exporter (TC 3.A.1.106) family. In terms of assembly, homodimer.

The protein resides in the cell inner membrane. It carries out the reaction ATP + H2O + lipid A-core oligosaccharideSide 1 = ADP + phosphate + lipid A-core oligosaccharideSide 2.. Its function is as follows. Involved in lipopolysaccharide (LPS) biosynthesis. Translocates lipid A-core from the inner to the outer leaflet of the inner membrane. Transmembrane domains (TMD) form a pore in the inner membrane and the ATP-binding domain (NBD) is responsible for energy generation. This is ATP-dependent lipid A-core flippase from Chromobacterium violaceum (strain ATCC 12472 / DSM 30191 / JCM 1249 / CCUG 213 / NBRC 12614 / NCIMB 9131 / NCTC 9757 / MK).